We begin with the raw amino-acid sequence, 179 residues long: Large ribosomal subunit protein uL5 (179 aa).

This sequence belongs to the universal ribosomal protein uL5 family. Part of the 50S ribosomal subunit; part of the 5S rRNA/L5/L18/L25 subcomplex. Contacts the 5S rRNA and the P site tRNA. Forms a bridge to the 30S subunit in the 70S ribosome.

In terms of biological role, this is one of the proteins that bind and probably mediate the attachment of the 5S RNA into the large ribosomal subunit, where it forms part of the central protuberance. In the 70S ribosome it contacts protein S13 of the 30S subunit (bridge B1b), connecting the 2 subunits; this bridge is implicated in subunit movement. Contacts the P site tRNA; the 5S rRNA and some of its associated proteins might help stabilize positioning of ribosome-bound tRNAs. The sequence is that of Large ribosomal subunit protein uL5 from Synechococcus elongatus (strain ATCC 33912 / PCC 7942 / FACHB-805) (Anacystis nidulans R2).